The sequence spans 263 residues: Hydroxyacylglutathione hydrolase (263 aa).

Residues His-55, His-57, Asp-59, His-60, His-117, Asp-134, and His-172 each coordinate Zn(2+).

The protein belongs to the metallo-beta-lactamase superfamily. Glyoxalase II family. Monomer. Requires Zn(2+) as cofactor.

The catalysed reaction is an S-(2-hydroxyacyl)glutathione + H2O = a 2-hydroxy carboxylate + glutathione + H(+). It functions in the pathway secondary metabolite metabolism; methylglyoxal degradation; (R)-lactate from methylglyoxal: step 2/2. In terms of biological role, thiolesterase that catalyzes the hydrolysis of S-D-lactoyl-glutathione to form glutathione and D-lactic acid. This Shewanella baltica (strain OS195) protein is Hydroxyacylglutathione hydrolase.